We begin with the raw amino-acid sequence, 556 residues long: Dihydroxy-acid dehydratase (556 aa).

Residue Cys-47 coordinates [2Fe-2S] cluster. Asp-79 provides a ligand contact to Mg(2+). Position 120 (Cys-120) interacts with [2Fe-2S] cluster. 2 residues coordinate Mg(2+): Asp-121 and Lys-122. Lys-122 carries the post-translational modification N6-carboxylysine. Cys-192 is a binding site for [2Fe-2S] cluster. Glu-444 lines the Mg(2+) pocket. The Proton acceptor role is filled by Ser-470.

It belongs to the IlvD/Edd family. In terms of assembly, homodimer. It depends on [2Fe-2S] cluster as a cofactor. Requires Mg(2+) as cofactor.

The enzyme catalyses (2R)-2,3-dihydroxy-3-methylbutanoate = 3-methyl-2-oxobutanoate + H2O. It catalyses the reaction (2R,3R)-2,3-dihydroxy-3-methylpentanoate = (S)-3-methyl-2-oxopentanoate + H2O. Its pathway is amino-acid biosynthesis; L-isoleucine biosynthesis; L-isoleucine from 2-oxobutanoate: step 3/4. It functions in the pathway amino-acid biosynthesis; L-valine biosynthesis; L-valine from pyruvate: step 3/4. Functionally, functions in the biosynthesis of branched-chain amino acids. Catalyzes the dehydration of (2R,3R)-2,3-dihydroxy-3-methylpentanoate (2,3-dihydroxy-3-methylvalerate) into 2-oxo-3-methylpentanoate (2-oxo-3-methylvalerate) and of (2R)-2,3-dihydroxy-3-methylbutanoate (2,3-dihydroxyisovalerate) into 2-oxo-3-methylbutanoate (2-oxoisovalerate), the penultimate precursor to L-isoleucine and L-valine, respectively. The polypeptide is Dihydroxy-acid dehydratase (Prochlorococcus marinus (strain MIT 9211)).